A 218-amino-acid polypeptide reads, in one-letter code: uncharacterized protein (218 aa).

A Response regulatory domain is found at 7–123; it reads RVALADDQPL…ELIDAIRAAA (117 aa). Position 58 is a 4-aspartylphosphate (Asp58). The HTH luxR-type domain maps to 150–215; it reads AEELAEPFTK…QAVVFAIRNG (66 aa). A DNA-binding region (H-T-H motif) is located at residues 174 to 193; it reads NEDIAEKLFVSESTVKTHVH.

In terms of processing, phosphorylated by YxjM.

It localises to the cytoplasm. Functionally, probable member of the two-component regulatory system YxjM/YxjL. This is an uncharacterized protein from Bacillus subtilis (strain 168).